The sequence spans 515 residues: Phenylalanine--tRNA ligase beta subunit (515 aa).

Residues 263–334 (HEYVKIYVDE…IVMGYNQMPR (72 aa)) enclose the B5 domain. Mg(2+)-binding residues include N312, D318, E321, and D322.

Belongs to the phenylalanyl-tRNA synthetase beta subunit family. Type 2 subfamily. In terms of assembly, tetramer of two alpha and two beta subunits. Mg(2+) serves as cofactor.

It localises to the cytoplasm. The catalysed reaction is tRNA(Phe) + L-phenylalanine + ATP = L-phenylalanyl-tRNA(Phe) + AMP + diphosphate + H(+). In Pyrobaculum aerophilum (strain ATCC 51768 / DSM 7523 / JCM 9630 / CIP 104966 / NBRC 100827 / IM2), this protein is Phenylalanine--tRNA ligase beta subunit.